Reading from the N-terminus, the 206-residue chain is Ribosomal RNA large subunit methyltransferase E (206 aa).

Positions 60, 62, 80, 96, and 121 each coordinate S-adenosyl-L-methionine. K161 acts as the Proton acceptor in catalysis.

It belongs to the class I-like SAM-binding methyltransferase superfamily. RNA methyltransferase RlmE family.

It is found in the cytoplasm. The enzyme catalyses uridine(2552) in 23S rRNA + S-adenosyl-L-methionine = 2'-O-methyluridine(2552) in 23S rRNA + S-adenosyl-L-homocysteine + H(+). Its function is as follows. Specifically methylates the uridine in position 2552 of 23S rRNA at the 2'-O position of the ribose in the fully assembled 50S ribosomal subunit. This Francisella tularensis subsp. holarctica (strain FTNF002-00 / FTA) protein is Ribosomal RNA large subunit methyltransferase E.